The primary structure comprises 429 residues: Histidine--tRNA ligase (429 aa).

The protein belongs to the class-II aminoacyl-tRNA synthetase family. As to quaternary structure, homodimer.

The protein resides in the cytoplasm. It catalyses the reaction tRNA(His) + L-histidine + ATP = L-histidyl-tRNA(His) + AMP + diphosphate + H(+). The protein is Histidine--tRNA ligase of Pseudomonas putida (strain GB-1).